A 330-amino-acid chain; its full sequence is Carbonic anhydrase (330 aa).

The chloroplast transit peptide-like stretch occupies residues 1–109; that stretch reads MSTASAFATN…AAARIDQITA (109 aa).

Belongs to the beta-class carbonic anhydrase family.

It localises to the cytoplasm. The enzyme catalyses hydrogencarbonate + H(+) = CO2 + H2O. Its function is as follows. Reversible hydration of carbon dioxide. The sequence is that of Carbonic anhydrase from Flaveria brownii (Brown's yellowtops).